Consider the following 479-residue polypeptide: Ribulose bisphosphate carboxylase large chain (479 aa).

The propeptide occupies 1–2; sequence MS. 2 residues coordinate substrate: Asn123 and Thr173. Lys175 acts as the Proton acceptor in catalysis. Substrate is bound at residue Lys177. Residues Lys201, Asp203, and Glu204 each contribute to the Mg(2+) site. At Lys201 the chain carries N6-carboxylysine. Ser208 is modified (phosphoserine). Catalysis depends on His294, which acts as the Proton acceptor. The substrate site is built by Arg295 and His327. Phosphothreonine is present on Thr330. Ser379 contacts substrate.

Belongs to the RuBisCO large chain family. Type I subfamily. In terms of assembly, heterohexadecamer of 8 large chains and 8 small chains; disulfide-linked. The disulfide link is formed within the large subunit homodimers. Mg(2+) serves as cofactor. In terms of processing, the disulfide bond which can form in the large chain dimeric partners within the hexadecamer appears to be associated with oxidative stress and protein turnover.

Its subcellular location is the plastid. It is found in the chloroplast. The catalysed reaction is 2 (2R)-3-phosphoglycerate + 2 H(+) = D-ribulose 1,5-bisphosphate + CO2 + H2O. The enzyme catalyses D-ribulose 1,5-bisphosphate + O2 = 2-phosphoglycolate + (2R)-3-phosphoglycerate + 2 H(+). Its function is as follows. RuBisCO catalyzes two reactions: the carboxylation of D-ribulose 1,5-bisphosphate, the primary event in carbon dioxide fixation, as well as the oxidative fragmentation of the pentose substrate in the photorespiration process. Both reactions occur simultaneously and in competition at the same active site. The protein is Ribulose bisphosphate carboxylase large chain of Nasturtium officinale (Watercress).